The following is a 64-amino-acid chain: uncharacterized protein (64 aa).

This is an uncharacterized protein from African swine fever virus (strain Badajoz 1971 Vero-adapted) (Ba71V).